Here is a 202-residue protein sequence, read N- to C-terminus: Putative 3-methyladenine DNA glycosylase (202 aa).

This sequence belongs to the DNA glycosylase MPG family.

This chain is Putative 3-methyladenine DNA glycosylase, found in Clostridium botulinum (strain Alaska E43 / Type E3).